Reading from the N-terminus, the 373-residue chain is Plasmepsin VIII (373 aa).

The first 21 residues, 1–21 (MNKFFVFPLLLILNSIVLVKS), serve as a signal peptide directing secretion. The Peptidase A1 domain maps to 50-370 (FIGEISIGNP…EKDNMRIGLA (321 aa)). Residues Asp68 and Asp258 contribute to the active site.

Belongs to the peptidase A1 family.

Its function is as follows. During the development in the mosquito vector, plays an essential role in sporozoite egress from the oocyst and sporozoite gliding motility, which is required for the invasion of salivary glands and subsequent transmission to the host. The protein is Plasmepsin VIII of Plasmodium berghei (strain Anka).